We begin with the raw amino-acid sequence, 207 residues long: Dephospho-CoA kinase (207 aa).

One can recognise a DPCK domain in the interval 5–202 (VVGLTGGIGS…LQYLKLSAEK (198 aa)). 13 to 18 (GSGKST) serves as a coordination point for ATP.

Belongs to the CoaE family.

It localises to the cytoplasm. It catalyses the reaction 3'-dephospho-CoA + ATP = ADP + CoA + H(+). It participates in cofactor biosynthesis; coenzyme A biosynthesis; CoA from (R)-pantothenate: step 5/5. Functionally, catalyzes the phosphorylation of the 3'-hydroxyl group of dephosphocoenzyme A to form coenzyme A. This chain is Dephospho-CoA kinase, found in Dechloromonas aromatica (strain RCB).